The chain runs to 540 residues: Chaperonin GroEL 3 (540 aa).

Residues 30-33 (TLGP), Lys51, 87-91 (DGTTT), Gly415, 480-482 (NAA), and Asp496 contribute to the ATP site.

This sequence belongs to the chaperonin (HSP60) family. Forms a cylinder of 14 subunits composed of two heptameric rings stacked back-to-back. Interacts with the co-chaperonin GroES.

The protein resides in the cytoplasm. The enzyme catalyses ATP + H2O + a folded polypeptide = ADP + phosphate + an unfolded polypeptide.. Together with its co-chaperonin GroES, plays an essential role in assisting protein folding. The GroEL-GroES system forms a nano-cage that allows encapsulation of the non-native substrate proteins and provides a physical environment optimized to promote and accelerate protein folding. The sequence is that of Chaperonin GroEL 3 from Bradyrhizobium sp. (strain BTAi1 / ATCC BAA-1182).